The chain runs to 39 residues: Mu-theraphotoxin-Ae1a (39 aa).

3 disulfides stabilise this stretch: Cys7–Cys21, Cys14–Cys26, and Cys20–Cys33. At Phe39 the chain carries Phenylalanine amide.

The protein belongs to the neurotoxin 10 (Hwtx-1) family. 47 subfamily. In terms of tissue distribution, expressed by the venom gland.

It is found in the secreted. In terms of biological role, insecticidal toxin that acts, at least partially, by inhibiting insect voltage-gated sodium (NaV) channels of several insect species. The toxin binds to the voltage sensor in NaV channel domain II and inhibits channel opening by shifting the threshold for channel activation to more positive voltages. The toxin binding is sensitive to residues in the S1-S2 loop of the domain II voltage sensor. In vivo, the recombinant toxin causes paralysis and/or death to two dipteran species (Lucilia cuprina and Drosophila melanogaster). In contrast, the toxin does not show paralytic or lethal effect on the cotton bollworm Helicoverpa armigera and the triatomine bug Rhodinius prolixus. This is Mu-theraphotoxin-Ae1a from Augacephalus ezendami (Mozambique baboon spider).